A 357-amino-acid polypeptide reads, in one-letter code: GTPase Obg (357 aa).

The 159-residue stretch at 1–159 (MKFVDEAFID…KSLKLELKVL (159 aa)) folds into the Obg domain. Residues 160-334 (ADVGLLGMPN…LVQSIFQHVH (175 aa)) form the OBG-type G domain. GTP is bound by residues 166–173 (GMPNAGKS), 191–195 (FTTLH), 213–216 (DIPG), 284–287 (NKLD), and 315–317 (SAL). Mg(2+)-binding residues include Ser-173 and Thr-193.

This sequence belongs to the TRAFAC class OBG-HflX-like GTPase superfamily. OBG GTPase family. In terms of assembly, monomer. Mg(2+) serves as cofactor.

The protein localises to the cytoplasm. Its function is as follows. An essential GTPase which binds GTP, GDP and possibly (p)ppGpp with moderate affinity, with high nucleotide exchange rates and a fairly low GTP hydrolysis rate. Plays a role in control of the cell cycle, stress response, ribosome biogenesis and in those bacteria that undergo differentiation, in morphogenesis control. The protein is GTPase Obg of Acidovorax sp. (strain JS42).